A 590-amino-acid chain; its full sequence is Aspartate--tRNA ligase (590 aa).

Position 172 (Glu172) interacts with L-aspartate. Residues Gln196–Lys199 form an aspartate region. Arg218 provides a ligand contact to L-aspartate. ATP contacts are provided by residues Arg218 to Glu220 and Gln227. His449 is an L-aspartate binding site. Residue Glu483 coordinates ATP. An L-aspartate-binding site is contributed by Arg490. Position 535-538 (Gly535–Arg538) interacts with ATP.

It belongs to the class-II aminoacyl-tRNA synthetase family. Type 1 subfamily. As to quaternary structure, homodimer.

The protein resides in the cytoplasm. It carries out the reaction tRNA(Asp) + L-aspartate + ATP = L-aspartyl-tRNA(Asp) + AMP + diphosphate. Catalyzes the attachment of L-aspartate to tRNA(Asp) in a two-step reaction: L-aspartate is first activated by ATP to form Asp-AMP and then transferred to the acceptor end of tRNA(Asp). This is Aspartate--tRNA ligase from Mannheimia succiniciproducens (strain KCTC 0769BP / MBEL55E).